A 130-amino-acid chain; its full sequence is Small ribosomal subunit protein uS11 (130 aa).

This sequence belongs to the universal ribosomal protein uS11 family. Part of the 30S ribosomal subunit. Interacts with proteins S7 and S18. Binds to IF-3.

Located on the platform of the 30S subunit, it bridges several disparate RNA helices of the 16S rRNA. Forms part of the Shine-Dalgarno cleft in the 70S ribosome. The polypeptide is Small ribosomal subunit protein uS11 (Thermosynechococcus vestitus (strain NIES-2133 / IAM M-273 / BP-1)).